A 268-amino-acid chain; its full sequence is 2,5-diamino-6-ribosylamino-4(3H)-pyrimidinone 5'-phosphate reductase (268 aa).

NADP(+) is bound by residues Thr-68, Asp-72, 103-106 (SNLR), and 191-195 (GAELL).

This sequence belongs to the HTP reductase family. Homodimer.

The catalysed reaction is 2,5-diamino-6-(1-D-ribitylamino)pyrimidin-4(3H)-one 5'-phosphate + NADP(+) = 2,5-diamino-6-(1-D-ribosylamino)pyrimidin-4(3H)-one 5'-phosphate + NADPH + H(+). It catalyses the reaction 2,5-diamino-6-(1-D-ribitylamino)pyrimidin-4(3H)-one 5'-phosphate + NAD(+) = 2,5-diamino-6-(1-D-ribosylamino)pyrimidin-4(3H)-one 5'-phosphate + NADH + H(+). It participates in cofactor biosynthesis; riboflavin biosynthesis. Its function is as follows. Catalyzes an early step in riboflavin biosynthesis, the NADPH-dependent reduction of the ribose side chain of 2,5-diamino-6-ribosylamino-4(3H)-pyrimidinone 5'-phosphate, yielding 2,5-diamino-6-ribitylamino-4(3H)-pyrimidinone 5'-phosphate. In Schizosaccharomyces pombe (strain 972 / ATCC 24843) (Fission yeast), this protein is 2,5-diamino-6-ribosylamino-4(3H)-pyrimidinone 5'-phosphate reductase.